The sequence spans 253 residues: Sulfate transporter CysZ (253 aa).

The next 4 helical transmembrane spans lie at 31–51 (FVIL…WWLF), 75–95 (LLWP…FSTI), 151–171 (IVLL…PVLW), and 222–242 (IPLL…AMWV).

Belongs to the CysZ family.

It localises to the cell inner membrane. Functionally, high affinity, high specificity proton-dependent sulfate transporter, which mediates sulfate uptake. Provides the sulfur source for the cysteine synthesis pathway. The chain is Sulfate transporter CysZ from Escherichia coli O8 (strain IAI1).